A 185-amino-acid polypeptide reads, in one-letter code: Large ribosomal subunit protein bL25 (185 aa).

This sequence belongs to the bacterial ribosomal protein bL25 family. CTC subfamily. In terms of assembly, part of the 50S ribosomal subunit; part of the 5S rRNA/L5/L18/L25 subcomplex. Contacts the 5S rRNA. Binds to the 5S rRNA independently of L5 and L18.

This is one of the proteins that binds to the 5S RNA in the ribosome where it forms part of the central protuberance. This is Large ribosomal subunit protein bL25 from Chlamydia muridarum (strain MoPn / Nigg).